The chain runs to 438 residues: Proline--tRNA ligase (438 aa).

Belongs to the class-II aminoacyl-tRNA synthetase family. ProS type 2 subfamily. Homodimer.

The protein localises to the cytoplasm. The catalysed reaction is tRNA(Pro) + L-proline + ATP = L-prolyl-tRNA(Pro) + AMP + diphosphate. Its function is as follows. Catalyzes the attachment of proline to tRNA(Pro) in a two-step reaction: proline is first activated by ATP to form Pro-AMP and then transferred to the acceptor end of tRNA(Pro). This chain is Proline--tRNA ligase, found in Rhodopseudomonas palustris (strain TIE-1).